Consider the following 243-residue polypeptide: Tryptophan synthase alpha chain (243 aa).

Active-site proton acceptor residues include Glu31 and Asp42.

This sequence belongs to the TrpA family. As to quaternary structure, tetramer of two alpha and two beta chains.

The enzyme catalyses (1S,2R)-1-C-(indol-3-yl)glycerol 3-phosphate + L-serine = D-glyceraldehyde 3-phosphate + L-tryptophan + H2O. The protein operates within amino-acid biosynthesis; L-tryptophan biosynthesis; L-tryptophan from chorismate: step 5/5. In terms of biological role, the alpha subunit is responsible for the aldol cleavage of indoleglycerol phosphate to indole and glyceraldehyde 3-phosphate. This is Tryptophan synthase alpha chain from Staphylococcus epidermidis (strain ATCC 35984 / DSM 28319 / BCRC 17069 / CCUG 31568 / BM 3577 / RP62A).